The following is a 213-amino-acid chain: Orotate phosphoribosyltransferase (213 aa).

A 5-phospho-alpha-D-ribose 1-diphosphate-binding site is contributed by Lys26. 34-35 (FF) provides a ligand contact to orotate. 5-phospho-alpha-D-ribose 1-diphosphate contacts are provided by residues 72–73 (YK), Arg99, Lys100, Lys103, His105, and 124–132 (DDVITAGTA). 2 residues coordinate orotate: Thr128 and Arg156.

Belongs to the purine/pyrimidine phosphoribosyltransferase family. PyrE subfamily. In terms of assembly, homodimer. Mg(2+) serves as cofactor.

The catalysed reaction is orotidine 5'-phosphate + diphosphate = orotate + 5-phospho-alpha-D-ribose 1-diphosphate. The protein operates within pyrimidine metabolism; UMP biosynthesis via de novo pathway; UMP from orotate: step 1/2. Its function is as follows. Catalyzes the transfer of a ribosyl phosphate group from 5-phosphoribose 1-diphosphate to orotate, leading to the formation of orotidine monophosphate (OMP). The chain is Orotate phosphoribosyltransferase from Pseudomonas savastanoi pv. phaseolicola (strain 1448A / Race 6) (Pseudomonas syringae pv. phaseolicola (strain 1448A / Race 6)).